Consider the following 671-residue polypeptide: Leucine aminopeptidase 2 (671 aa).

Residues 184-186 (QLE) and 311-316 (PYGGME) contribute to the substrate site. Residue H340 coordinates Zn(2+). E341 (proton acceptor) is an active-site residue. Zn(2+) is bound by residues H344 and E363. The Proton donor role is filled by Y429.

Belongs to the peptidase M1 family. It depends on Zn(2+) as a cofactor.

The protein resides in the cytoplasm. It is found in the nucleus. The catalysed reaction is an epoxide + H2O = an ethanediol. With respect to regulation, inhibited by 3-(4-benzyloxyphenyl)-2-(R)-amino-1-propanethiol (thioamine) and N-hydroxy-N-(2-(S)-amino-3-(4-benzyloxyphenyl)propyl)-5-carboxypen-tanamide (hydroxamic acid). The aminopeptidase activity is stimulated by LTA(4). Its function is as follows. Aminopeptidase that preferentially cleaves di- and tripeptides. Also has low epoxide hydrolase activity (in vitro). Can hydrolyze the epoxide leukotriene LTA(4) but it forms preferentially 5,6-dihydroxy-7,9,11,14-eicosatetraenoic acid rather than the cytokine leukotriene B(4) as the product compared to the homologous mammalian enzyme (in vitro). The sequence is that of Leucine aminopeptidase 2 from Saccharomyces cerevisiae (strain YJM789) (Baker's yeast).